The chain runs to 622 residues: Transcription factor SKN7 (622 aa).

Polar residues predominate over residues 1–12 (MSFSTINSNVNK). The disordered stretch occupies residues 1 to 29 (MSFSTINSNVNKTTGDSNNNTTENSSTAD). A compositionally biased stretch (low complexity) spans 13 to 27 (TTGDSNNNTTENSST). The interval 84–190 (ANEFVRKLFR…GLDNIKRKIP (107 aa)) is DNA-binding domain. The interval 212 to 303 (TNPNNPSGSL…NNFNTLCSTL (92 aa)) is hydrophobic repeat HR-A/B. The stretch at 240–260 (FGNLRRRVDKLQKELDMSKME) forms a coiled coil. Residues 378–492 (HVLLVEDDAV…DLHSILIRYL (115 aa)) enclose the Response regulatory domain. A 4-aspartylphosphate modification is found at aspartate 427. 2 disordered regions span residues 501 to 579 (QQLP…QHHN) and 599 to 622 (TVPHSSMGSTPQLPQSTLQENQLS). Over residues 512–527 (THSNTNTANSNPNTIN) the composition is skewed to low complexity. Positions 537-554 (DNPSTTTPVTPGASISSA) are enriched in polar residues. The span at 555-578 (QHVQQGQQEQQHQIFHAQQQQQHH) shows a compositional bias: low complexity. Positions 600-622 (VPHSSMGSTPQLPQSTLQENQLS) are enriched in polar residues.

The protein belongs to the SKN7 family. In terms of assembly, homotrimer. Post-translationally, the phosphorelay mechanism involves the sequential transfer of a phosphate group from 'His-576' (H1) to 'Asp-1144' (D1) of SLN1, then to 'His-64' (H2) of YPD1 and finally to Asp-427 (D2) of SKN7.

It localises to the nucleus. Functionally, transcription factor that is part of a SLN1-YPD1-SKN7 two-component regulatory system, which controls gene expression in response to changes in the osmolarity of the extracellular environment. Under low osmotic conditions, phosphorylated and activated by the phosphorelay intermediate protein YPD1. Also activated in response to oxidative stress, independent on the two-component regulatory system. Regulates heat shock genes in response to oxidative stress and genes involved in cell wall integrity in response to osmotic changes. The sequence is that of Transcription factor SKN7 (SKN7) from Saccharomyces cerevisiae (strain ATCC 204508 / S288c) (Baker's yeast).